The primary structure comprises 339 residues: Ferredoxin--NADP reductase (339 aa).

Residues glutamate 35, glutamine 43, tyrosine 48, valine 88, phenylalanine 122, aspartate 287, and serine 327 each coordinate FAD.

The protein belongs to the ferredoxin--NADP reductase type 2 family. In terms of assembly, homodimer. Requires FAD as cofactor.

It carries out the reaction 2 reduced [2Fe-2S]-[ferredoxin] + NADP(+) + H(+) = 2 oxidized [2Fe-2S]-[ferredoxin] + NADPH. This chain is Ferredoxin--NADP reductase, found in Leuconostoc citreum (strain KM20).